The following is a 465-amino-acid chain: Cysteine--tRNA ligase (465 aa).

Position 28 (Cys28) interacts with Zn(2+). The short motif at 30–40 is the 'HIGH' region element; sequence MTVYDYCHLGH. Cys209, His234, and Glu238 together coordinate Zn(2+). Residues 266-270 carry the 'KMSKS' region motif; it reads KMSKS. Residue Lys269 participates in ATP binding.

It belongs to the class-I aminoacyl-tRNA synthetase family. Monomer. Requires Zn(2+) as cofactor.

It is found in the cytoplasm. The catalysed reaction is tRNA(Cys) + L-cysteine + ATP = L-cysteinyl-tRNA(Cys) + AMP + diphosphate. The protein is Cysteine--tRNA ligase of Methylococcus capsulatus (strain ATCC 33009 / NCIMB 11132 / Bath).